The primary structure comprises 602 residues: Sodium- and chloride-dependent GABA transporter 2 (602 aa).

Over Met-1–Glu-40 the chain is Cytoplasmic. Transmembrane regions (helical) follow at residues Phe-41 to Leu-61, Gly-68 to Leu-88, and Ile-121 to Phe-141. Residues Ser-142–Trp-206 are Extracellular-facing. Cys-153 and Cys-162 are disulfide-bonded. Residues Asn-169, Asn-173, and Asn-178 are each glycosylated (N-linked (GlcNAc...) asparagine). The next 2 helical transmembrane spans lie at Glu-207–Val-227 and Val-233–Val-253. A glycan (N-linked (GlcNAc...) asparagine) is linked at Asn-269. The next 7 membrane-spanning stretches (helical) occupy residues Ala-282–Ser-302, Ile-319–Met-339, Val-366–Leu-386, Val-418–Gly-438, Gly-453–Ala-473, Pro-490–Phe-510, and Trp-528–Trp-548. Residues Ser-549–Cys-602 are Cytoplasmic-facing. The residue at position 587 (Thr-587) is a Phosphothreonine. Position 591 is a phosphoserine (Ser-591).

This sequence belongs to the sodium:neurotransmitter symporter (SNF) (TC 2.A.22) family. SLC6A13 subfamily. As to expression, expressed at high levels in liver, followed by kidney and leptomeninges, and very low levels in the cerebellum (at protein level). In the brain, detected in some blood vessels (at protein level). In the kidney, expressed in the cortex, including parts of the proximal tubules, but not in the medulla (at protein level). In the liver, highest expression in periportal hepatocytes, with highest density at the vascular side (at protein level). Also detected at low levels in other organs, including skeletal muscle.

It localises to the cell membrane. The protein resides in the basolateral cell membrane. It catalyses the reaction 4-aminobutanoate(out) + chloride(out) + 2 Na(+)(out) = 4-aminobutanoate(in) + chloride(in) + 2 Na(+)(in). The catalysed reaction is taurine(out) + chloride(out) + 2 Na(+)(out) = taurine(in) + chloride(in) + 2 Na(+)(in). The enzyme catalyses beta-alanine(out) + chloride(out) + 2 Na(+)(out) = beta-alanine(in) + chloride(in) + 2 Na(+)(in). It carries out the reaction hypotaurine(out) + chloride(out) + 2 Na(+)(out) = hypotaurine(in) + chloride(in) + 2 Na(+)(in). With respect to regulation, gamma-aminobutyric acid (GABA) transport is inhibited by beta-alanine, taurine, hypotaurine, beta-guanidinopropionic acid, 2,3-diaminopropionic acid, guvacine and nipecotic acid. Beta-alanine transport is inhibited by GABA. Taurine transport is inhibited by GABA, beta-alanine, SNAP-5114, nigericin, nipecotic acid and ouabain. Functionally, mediates sodium- and chloride-dependent transport of gamma-aminobutyric acid (GABA). Can also mediate transport of beta-alanine, taurine and hypotaurine and is the major taurine transporter in hepatocytes. In Mus musculus (Mouse), this protein is Sodium- and chloride-dependent GABA transporter 2 (Slc6a13).